The primary structure comprises 193 residues: uncharacterized protein (193 aa).

This is an uncharacterized protein from Acidianus convivator (ATV).